Here is a 360-residue protein sequence, read N- to C-terminus: Ethanolamine-phosphate cytidylyltransferase (360 aa).

Residues 207–208, 215–218, Lys-243, 291–294, and 321–325 contribute to the CTP site; these read GF, HTEA, HGDD, and HTEGL.

It belongs to the cytidylyltransferase family.

The enzyme catalyses phosphoethanolamine + CTP + H(+) = CDP-ethanolamine + diphosphate. It functions in the pathway phospholipid metabolism; phosphatidylethanolamine biosynthesis; phosphatidylethanolamine from ethanolamine: step 2/3. Functionally, ethanolamine-phosphate cytidylyltransferase that catalyzes the second step in the synthesis of phosphatidylethanolamine (PE) from ethanolamine via the CDP-ethanolamine pathway. This chain is Ethanolamine-phosphate cytidylyltransferase (pctA), found in Dictyostelium discoideum (Social amoeba).